The sequence spans 210 residues: 23 kDa jasmonate-induced protein (210 aa).

The protein belongs to the jasmonate-induced protein family.

The chain is 23 kDa jasmonate-induced protein from Hordeum vulgare (Barley).